A 398-amino-acid chain; its full sequence is MKLNKKTVEDIQVKGKKVLVRCDFNVPLKDGVITDENRLVGAMPTIKYLVNEGAKVILCSHLGKPKGEAKPELSLAPVAKRLSELLEKEVVFAADDTVVGENAKKAVAEMKDGDVVLLQNTRYRKEETKNEENFSKELASLADVFVNDAFGTAHRAHCSTVGVADFLNEAACGYLIQKELKFLGDAVETPVRPFVAILGGAKVSDKINVINNLLEKVDTLIIGGGMAYTFLKAQGYTIGKSLVEEDKVEYAKEMMDKAKAKGVKLLLPVDNVVGEEFDANTTPVTTEDANIPEGYMGLDIGPKTSALYADAVRTAKTVVWNGPMGVFEFANFAKGTIAVAEAMAEADATTIIGGGDSAAAVNQLGFGDKMTHISTGGGASLEFLEGKELPGIVALSDK.

Residues 23-25 (DFN), R38, 61-64 (HLGK), R122, and R155 each bind substrate. Residues K206, G297, E328, and 354–357 (GGDS) contribute to the ATP site.

The protein belongs to the phosphoglycerate kinase family. As to quaternary structure, monomer.

The protein localises to the cytoplasm. It carries out the reaction (2R)-3-phosphoglycerate + ATP = (2R)-3-phospho-glyceroyl phosphate + ADP. The protein operates within carbohydrate degradation; glycolysis; pyruvate from D-glyceraldehyde 3-phosphate: step 2/5. The chain is Phosphoglycerate kinase from Clostridium novyi (strain NT).